The following is a 1266-amino-acid chain: 5-oxoprolinase 1 (1266 aa).

It belongs to the oxoprolinase family. Expressed in roots, stems, leaves, flowers and siliques.

It localises to the cytoplasm. It catalyses the reaction 5-oxo-L-proline + ATP + 2 H2O = L-glutamate + ADP + phosphate + H(+). Catalyzes the cleavage of 5-oxo-L-proline to form L-glutamate coupled to the hydrolysis of ATP to ADP and inorganic phosphate. Acts in the glutathione degradation pathway. This Arabidopsis thaliana (Mouse-ear cress) protein is 5-oxoprolinase 1.